We begin with the raw amino-acid sequence, 270 residues long: Probable inositol 1-monophosphatase ImpA (270 aa).

4 residues coordinate Mg(2+): glutamate 69, aspartate 85, isoleucine 87, and aspartate 88. Glutamate 69 lines the substrate pocket. Substrate-binding positions include 87–90 (IDGT), arginine 187, and aspartate 216. Aspartate 216 contributes to the Mg(2+) binding site.

This sequence belongs to the inositol monophosphatase superfamily. Requires Mg(2+) as cofactor.

The catalysed reaction is a myo-inositol phosphate + H2O = myo-inositol + phosphate. The protein operates within polyol metabolism; myo-inositol biosynthesis; myo-inositol from D-glucose 6-phosphate: step 2/2. Functionally, catalyzes the dephosphorylation of inositol 1-phosphate (I-1-P) to yield free myo-inositol, a key metabolite in mycobacteria. In Mycobacterium tuberculosis (strain ATCC 25618 / H37Rv), this protein is Probable inositol 1-monophosphatase ImpA (impA).